A 330-amino-acid chain; its full sequence is Putative protein N-methyltransferase FAM86B1 (330 aa).

S-adenosyl-L-methionine is bound by residues W139, 165–167 (GSG), W228, and A247.

The protein belongs to the class I-like SAM-binding methyltransferase superfamily. EEF2KMT family.

The sequence is that of Putative protein N-methyltransferase FAM86B1 from Homo sapiens (Human).